The primary structure comprises 71 residues: 7.9 kDa protein (71 aa).

In Pseudomonas aeruginosa (Bacteriophage Pf3), this protein is 7.9 kDa protein.